Reading from the N-terminus, the 433-residue chain is Cyclin-dependent kinase 15 (433 aa).

The interval 46 to 83 (ASSSTASFHPRGLEAASAQKLKSKRPRSNSDSFQEENL) is disordered. A Protein kinase domain is found at 52-336 (SFHPRGLEAA…SKLPNYNPEW (285 aa)). ATP is bound by residues 58–66 (LEAASAQKL) and Glu81. Thr173 serves as the catalytic Proton acceptor.

The protein belongs to the protein kinase superfamily. CMGC Ser/Thr protein kinase family. CDC2/CDKX subfamily. It depends on Mg(2+) as a cofactor.

The enzyme catalyses L-seryl-[protein] + ATP = O-phospho-L-seryl-[protein] + ADP + H(+). It carries out the reaction L-threonyl-[protein] + ATP = O-phospho-L-threonyl-[protein] + ADP + H(+). Functionally, serine/threonine-protein kinase that acts like an antiapoptotic protein that counters TRAIL/TNFSF10-induced apoptosis by inducing phosphorylation of BIRC5 at 'Thr-34'. The protein is Cyclin-dependent kinase 15 (Cdk15) of Mus musculus (Mouse).